A 108-amino-acid chain; its full sequence is UPF0060 membrane protein YnfA (108 aa).

At 1–5 the chain is on the periplasmic side; the sequence is MIKTT. A helical transmembrane segment spans residues 6–26; it reads LLFFATALCEIIGCFLPWLWL. At 27-30 the chain is on the cytoplasmic side; the sequence is KRNA. The helical transmembrane segment at 31 to 51 threads the bilayer; that stretch reads SIWLLLPAGISLALFVWLLTL. Over 52 to 60 the chain is Periplasmic; sequence HPAASGRVY. Residues 61–81 form a helical membrane-spanning segment; it reads AAYGGVYVCTALMWLRVVDGV. Over 82–84 the chain is Cytoplasmic; it reads KLS. A helical membrane pass occupies residues 85–105; the sequence is LYDWTGALIALCGMLIIVAGW. Topologically, residues 106 to 108 are periplasmic; that stretch reads GRT.

This sequence belongs to the UPF0060 family.

It localises to the cell inner membrane. The protein is UPF0060 membrane protein YnfA of Shigella flexneri serotype 5b (strain 8401).